Consider the following 953-residue polypeptide: Valine--tRNA ligase (953 aa).

The 'HIGH' region motif lies at 42–52 (PNVTGSLHMGH). The 'KMSKS' region motif lies at 554–558 (KMSKS). Lys-557 is an ATP binding site. The stretch at 884-952 (LIDKDAELDR…LEQQKATIAA (69 aa)) forms a coiled coil.

It belongs to the class-I aminoacyl-tRNA synthetase family. ValS type 1 subfamily. Monomer.

Its subcellular location is the cytoplasm. It catalyses the reaction tRNA(Val) + L-valine + ATP = L-valyl-tRNA(Val) + AMP + diphosphate. Its function is as follows. Catalyzes the attachment of valine to tRNA(Val). As ValRS can inadvertently accommodate and process structurally similar amino acids such as threonine, to avoid such errors, it has a 'posttransfer' editing activity that hydrolyzes mischarged Thr-tRNA(Val) in a tRNA-dependent manner. This is Valine--tRNA ligase from Vibrio cholerae serotype O1 (strain ATCC 39315 / El Tor Inaba N16961).